Reading from the N-terminus, the 968-residue chain is RNA polymerase-associated protein RapA (968 aa).

The Helicase ATP-binding domain maps to 164-334 (DVGRRHAPRV…FARLRLLDPN (171 aa)). Residue 177 to 184 (DEVGLGKT) coordinates ATP. The short motif at 280 to 283 (DEAH) is the DEAH box element. The 196-residue stretch at 490 to 685 (RVEWLMGYLT…ALKAQLEQGR (196 aa)) folds into the Helicase C-terminal domain.

This sequence belongs to the SNF2/RAD54 helicase family. RapA subfamily. As to quaternary structure, interacts with the RNAP. Has a higher affinity for the core RNAP than for the holoenzyme. Its ATPase activity is stimulated by binding to RNAP.

Transcription regulator that activates transcription by stimulating RNA polymerase (RNAP) recycling in case of stress conditions such as supercoiled DNA or high salt concentrations. Probably acts by releasing the RNAP, when it is trapped or immobilized on tightly supercoiled DNA. Does not activate transcription on linear DNA. Probably not involved in DNA repair. This is RNA polymerase-associated protein RapA from Salmonella schwarzengrund (strain CVM19633).